Here is a 177-residue protein sequence, read N- to C-terminus: Nucleoside triphosphate/diphosphate phosphatase (177 aa).

Catalysis depends on Arg23, which acts as the Proton donor. Residues Asn87, Asp103, Asp105, Asp107, Asp120, and Glu123 each contribute to the Mg(2+) site.

Belongs to the Ntdp family. Requires Mg(2+) as cofactor.

It catalyses the reaction a ribonucleoside 5'-triphosphate + H2O = a ribonucleoside 5'-diphosphate + phosphate + H(+). The enzyme catalyses a ribonucleoside 5'-diphosphate + H2O = a ribonucleoside 5'-phosphate + phosphate + H(+). In terms of biological role, has nucleoside phosphatase activity towards nucleoside triphosphates and nucleoside diphosphates. This Streptococcus thermophilus (strain ATCC BAA-491 / LMD-9) protein is Nucleoside triphosphate/diphosphate phosphatase.